A 353-amino-acid chain; its full sequence is Paraneoplastic antigen Ma1 homolog (353 aa).

It belongs to the PNMA family.

The protein localises to the nucleus. It localises to the nucleolus. This is Paraneoplastic antigen Ma1 homolog (PNMA1) from Bos taurus (Bovine).